The sequence spans 741 residues: Mitofusin-1 (741 aa).

The Cytoplasmic segment spans residues 1 to 584 (MAEPVSPLKH…ASQEELMITL (584 aa)). The part of a helix bundle domain, formed by helices from N-terminal and C-terminal regions stretch occupies residues 9-73 (KHFVLAKKAI…LSIIGEVLSR (65 aa)). Residues 72–321 (SRRHMKVAFF…ARLQEFQNFE (250 aa)) enclose the Dynamin-type G domain. The interval 82–89 (GRTSSGKS) is G1 motif. GTP is bound at residue 85 to 90 (SSGKSS). Residues 108 to 109 (IT) form a G2 motif region. Residues 178–181 (DSPG) are G3 motif. GTP is bound at residue 237–240 (NRWD). A G4 motif region spans residues 237-240 (NRWD). Position 266 (E266) is a region of interest, G5 motif. The GTP site is built by S284 and K286. The segment at 338-364 (EQHTIRAKQILATVKNIMDSVNLAAED) is part of a helix bundle domain, formed by helices from N-terminal and C-terminal regions. Residues 371–408 (EEREDQIDRLDFIRNQMNLLTLDVKKKIKEVTEEVANK) are a coiled coil. A helical transmembrane segment spans residues 585-605 (VTGLASVTSRTSMGIIIVGGV). The Mitochondrial intermembrane portion of the chain corresponds to 606–608 (IWK). A helical membrane pass occupies residues 609-629 (TIGWKLLSVSLTMYGALYLYE). The Cytoplasmic segment spans residues 630–741 (RLSWTTHAKE…QFLPSSNEES (112 aa)). The stretch at 679–734 (RLCQQVDITQKQLEEEIARLPKEIDQLEKIQNNSKLLRNKAVQLENELENFTKQFL) forms a coiled coil. The tract at residues 703-734 (DQLEKIQNNSKLLRNKAVQLENELENFTKQFL) is part of a helix bundle domain, formed by helices from N-terminal and C-terminal regions.

It belongs to the TRAFAC class dynamin-like GTPase superfamily. Dynamin/Fzo/YdjA family. Mitofusin subfamily. In terms of assembly, homodimer, also in the absence of bound GTP. Forms higher oligomers in the presence of a transition state GTP analog. Forms homomultimers and heteromultimers with MFN2. Oligomerization is essential for mitochondrion fusion. Component of a high molecular weight multiprotein complex. Interacts with VAT1. Interacts with THG1L; THG1L probably functions as a guanyl-nucleotide exchange factor/GEF, activating MFN1. Ubiquitinated by non-degradative ubiquitin by PRKN. Deubiquitination by USP30 inhibits mitochondrial fusion. Ubiquitinated by MARCHF5. When mitochondria are depolarized and dysfunctional, it is ubiquitinated by a SCF (SKP1-CUL1-F-box protein) E3 ubiquitin-protein ligase complex that contains FBXO7 and PRKN. In terms of tissue distribution, detected in kidney and heart (at protein level). Ubiquitous. Expressed at slightly higher level in kidney and heart. Isoform 2 may be overexpressed in some tumors, such as lung cancers.

It localises to the mitochondrion outer membrane. The protein localises to the cytoplasm. The enzyme catalyses GTP + H2O = GDP + phosphate + H(+). Its function is as follows. Mitochondrial outer membrane GTPase that mediates mitochondrial clustering and fusion. Membrane clustering requires GTPase activity. It may involve a major rearrangement of the coiled coil domains. Mitochondria are highly dynamic organelles, and their morphology is determined by the equilibrium between mitochondrial fusion and fission events. Overexpression induces the formation of mitochondrial networks (in vitro). Has low GTPase activity. This chain is Mitofusin-1 (MFN1), found in Homo sapiens (Human).